A 329-amino-acid polypeptide reads, in one-letter code: Pantothenate kinase (329 aa).

The disordered stretch occupies residues 1–22 (MPAQGPSHGELPPADAGRESSP). 107–114 (GSVAVGKS) provides a ligand contact to ATP.

The protein belongs to the prokaryotic pantothenate kinase family.

The protein resides in the cytoplasm. It catalyses the reaction (R)-pantothenate + ATP = (R)-4'-phosphopantothenate + ADP + H(+). It participates in cofactor biosynthesis; coenzyme A biosynthesis; CoA from (R)-pantothenate: step 1/5. This Nocardioides sp. (strain ATCC BAA-499 / JS614) protein is Pantothenate kinase.